The primary structure comprises 380 residues: tRNA-specific 2-thiouridylase MnmA (380 aa).

Residues Ala10–Ser17 and Leu36 contribute to the ATP site. The active-site Nucleophile is Cys106. Cys106 and Cys202 are disulfide-bonded. Gly130 contacts ATP. Positions Lys152–Gln154 are interaction with tRNA. The active-site Cysteine persulfide intermediate is the Cys202. The segment at Arg308–Tyr309 is interaction with tRNA.

This sequence belongs to the MnmA/TRMU family.

The protein localises to the cytoplasm. It catalyses the reaction S-sulfanyl-L-cysteinyl-[protein] + uridine(34) in tRNA + AH2 + ATP = 2-thiouridine(34) in tRNA + L-cysteinyl-[protein] + A + AMP + diphosphate + H(+). Catalyzes the 2-thiolation of uridine at the wobble position (U34) of tRNA, leading to the formation of s(2)U34. In Leptospira biflexa serovar Patoc (strain Patoc 1 / Ames), this protein is tRNA-specific 2-thiouridylase MnmA.